A 378-amino-acid chain; its full sequence is RNA polymerase sigma factor SigA (378 aa).

Positions Met-1–Asn-29 are disordered. The segment at Leu-145 to Thr-215 is sigma-70 factor domain-2. Positions Asp-169–Gln-172 match the Interaction with polymerase core subunit RpoC motif. A sigma-70 factor domain-3 region spans residues Glu-224–Ala-300. The segment at Ile-313–His-366 is sigma-70 factor domain-4. Residues Leu-339–Ala-358 constitute a DNA-binding region (H-T-H motif).

This sequence belongs to the sigma-70 factor family. RpoD/SigA subfamily. As to quaternary structure, interacts transiently with the RNA polymerase catalytic core.

The protein localises to the cytoplasm. Sigma factors are initiation factors that promote the attachment of RNA polymerase to specific initiation sites and are then released. This sigma factor is the primary sigma factor during exponential growth. The chain is RNA polymerase sigma factor SigA from Clostridium acetobutylicum (strain ATCC 824 / DSM 792 / JCM 1419 / IAM 19013 / LMG 5710 / NBRC 13948 / NRRL B-527 / VKM B-1787 / 2291 / W).